We begin with the raw amino-acid sequence, 230 residues long: Cysteine S-methyltransferase OspZ (230 aa).

The segment at 49-52 (GITR) is interaction with host proteins TAB2, TAB3 and ZRANB3. S-adenosyl-L-methionine-binding residues include alanine 92, serine 98, arginine 107, glutamine 111, tyrosine 204, and glutamate 208.

It belongs to the NleE/OspZ family. In terms of assembly, monomer.

It is found in the secreted. It localises to the host cytoplasm. The protein resides in the host nucleus. The catalysed reaction is L-cysteinyl-[protein] + S-adenosyl-L-methionine = S-methyl-L-cysteinyl-[protein] + S-adenosyl-L-homocysteine + H(+). Cysteine methyltransferase effector that inhibits host cell NF-kappa-B activation by preventing nuclear translocation of host protein RELA/p65. Acts by mediating cysteine methylation of host proteins TAB2 and TAB3: methylation of a conserved cysteine residue of the RanBP2-type zinc finger (NZF) of TAB2 and TAB3 disrupts zinc-binding, thereby inactivating the ubiquitin chain-binding activity of TAB2 and TAB3, leading to NF-kappa-B inactivation. Also mediates cysteine methylation of host protein ZRANB3, inactivating its ability to bind ubiquitin chains. In Shigella flexneri, this protein is Cysteine S-methyltransferase OspZ.